Consider the following 464-residue polypeptide: Na(+)/H(+) antiporter NhaA 2 (464 aa).

A run of 11 helical transmembrane segments spans residues 53–73, 96–116, 134–154, 165–185, 195–215, 219–239, 257–277, 313–333, 340–360, 378–398, and 412–432; these read VGGIILLVAAAAALIWANSPW, LTLGAWAADGLLAIFFLVVGL, ALPIAAAVGGMVVPALIFVLV, GWAIPTATDIAFAVAVLAVIS, FLLTLAVVDDLLAITVIAVFY, IKAWALALAVVPLALFTVCAQ, VLVHESGVHATVAGVLLGFAV, IAIPVFAFFAAGVSIGGLSGL, PITLGIVLGLVAGKPIGILVT, WVDVLGMSMLAGIGFTVSLLI, and FVKIGVLSGSLLAASLAAIVL.

The protein belongs to the NhaA Na(+)/H(+) (TC 2.A.33) antiporter family.

The protein resides in the cell membrane. It catalyses the reaction Na(+)(in) + 2 H(+)(out) = Na(+)(out) + 2 H(+)(in). Its function is as follows. Na(+)/H(+) antiporter that extrudes sodium in exchange for external protons. The polypeptide is Na(+)/H(+) antiporter NhaA 2 (Mycolicibacterium vanbaalenii (strain DSM 7251 / JCM 13017 / BCRC 16820 / KCTC 9966 / NRRL B-24157 / PYR-1) (Mycobacterium vanbaalenii)).